The following is a 606-amino-acid chain: Granule-bound starch synthase 1, chloroplastic/amyloplastic (606 aa).

The N-terminal 76 residues, 1 to 76 (MSALTTSQLA…GSRRFPSVVV (76 aa)), are a transit peptide targeting the chloroplast. The interval 29–67 (RHGFQGLKPRSPAGGDASSLSVTTSARATPKQQRSVQRG) is disordered. Positions 46–66 (SSLSVTTSARATPKQQRSVQR) are enriched in polar residues. Residue Lys97 participates in ADP-alpha-D-glucose binding.

The protein belongs to the glycosyltransferase 1 family. Bacterial/plant glycogen synthase subfamily.

Its subcellular location is the plastid. The protein resides in the chloroplast. It localises to the amyloplast. It catalyses the reaction an NDP-alpha-D-glucose + [(1-&gt;4)-alpha-D-glucosyl](n) = [(1-&gt;4)-alpha-D-glucosyl](n+1) + a ribonucleoside 5'-diphosphate + H(+). It functions in the pathway glycan biosynthesis; starch biosynthesis. Its function is as follows. Required for the synthesis of amylose in endosperm. In Oryza sativa (Rice), this protein is Granule-bound starch synthase 1, chloroplastic/amyloplastic (WAXY).